The primary structure comprises 420 residues: uncharacterized protein (420 aa).

The protein belongs to the asfivirus K421R family.

Its subcellular location is the virion. This is an uncharacterized protein from Ornithodoros (relapsing fever ticks).